The primary structure comprises 705 residues: Probable iron-sulfur-binding oxidoreductase FadF (705 aa).

6 helical membrane-spanning segments follow: residues 4–24 (FLIANALLFLIVTAYAVYLFV), 71–91 (IIHVMFFYGFILVQFGAIDFI), 109–129 (AFTFFQEIVTFLILIAVGWAF), 146–166 (AGLVLIFIGGLMLTVLLGNGM), 173–193 (HGLSWSEPIASGIAFMLSGVG), and 199–219 (VIFYIAWWIHLLFLLSFLVYV). 2 consecutive 4Fe-4S ferredoxin-type domains span residues 268 to 298 (QSQLLDLYACVECGRCTNMCPATGTGKMLSP) and 360 to 391 (GDVITEEEIWACTTCRNCEDQCPVMNEHVDKI). Positions 277, 280, 283, 287, 371, 374, 377, and 381 each coordinate [4Fe-4S] cluster.

[4Fe-4S] cluster serves as cofactor.

It is found in the cell membrane. This chain is Probable iron-sulfur-binding oxidoreductase FadF (fadF), found in Bacillus subtilis (strain 168).